Consider the following 592-residue polypeptide: ATP-dependent RNA helicase DBP3 (592 aa).

A disordered region spans residues 1–146 (MGKRPIEDDA…AGSYTEHTEL (146 aa)). Basic residues predominate over residues 19 to 31 (KKSKKEKSGKSKK). A compositionally biased stretch (basic and acidic residues) spans 73-82 (EAKEASKAGK). Over residues 97-108 (AARKAARKAEKK) the composition is skewed to basic residues. Positions 116–141 (TASSAPTEASSVPAQTLSSSNAGSYT) are enriched in polar residues. Positions 179 to 206 (VNFKYLPVTDESQRAPFAGFTAPTPIQA) match the Q motif motif. A Helicase ATP-binding domain is found at 209–382 (WPFLLSGRDM…STFMVSPVRI (174 aa)). 222–229 (AETGSGKT) serves as a coordination point for ATP. The short motif at 330 to 333 (DEAD) is the DEAD box element. Residues 413-562 (RLLQLLKQYQ…EVPEELLKFG (150 aa)) form the Helicase C-terminal domain.

It belongs to the DEAD box helicase family. DDX5/DBP2 subfamily.

The protein resides in the nucleus. The protein localises to the nucleolus. The enzyme catalyses ATP + H2O = ADP + phosphate + H(+). In terms of biological role, ATP-dependent RNA helicase required for 60S ribosomal subunit synthesis. Involved in efficient pre-rRNA processing, predominantly at site A3, which is necessary for the normal formation of 25S and 5.8S rRNAs. The chain is ATP-dependent RNA helicase DBP3 (DBP3) from Phaeosphaeria nodorum (strain SN15 / ATCC MYA-4574 / FGSC 10173) (Glume blotch fungus).